The chain runs to 510 residues: MDENGLDLSLGLPCGGGAASEKSKSGSSSDSKVEEVDRDGKVINDFKNFLDGGTSSQKHDSGVGSQRSDSTKHEGNLLSSINVDVDASKKLNSGGFWVQNDSRPVEVEEDRRADVGDKRKNLFRESSQQKKQEREGHHADTHDKTRTSHISITTDEGSTAENEDVADSETVGSTSRQILQHDESSKRFVGSSGLAEVHKELRSVPASSGVELIGQRRFTISSEKDVKFGNIPYTIPFQGQSINIMNLPYSMPLNSNTVSTTSTTSYPVPGVMQLMATTCVDRPPSHPVIPAYLPLMFGYSSVQLPTLDNDNLHGVASHLLQLHPSHGRGPLGSDKQKDGPNISQAAASSIPHKSSDSVQYDGRAMEHVKGNGRQHKAEETSNSRGEENVKGSNISFRAKDPPDQPRAEAVPSEFSTIRPGLAADLKFGGSGSYPNLPWVSTTGPGPNGRTISGVTYRYSSTQIRIVCACHGSHMSPDDFVRHASVEQTSQEPGTGVSSFPSSNPAASAQS.

Disordered regions lie at residues 1 to 179, 323 to 414, and 481 to 510; these read MDEN…RQIL, HPSH…PSEF, and RHAS…SAQS. Composition is skewed to basic and acidic residues over residues 31–44 and 103–146; these read SKVE…KVIN and RPVE…DKTR. The segment covering 148–160 has biased composition (polar residues); that stretch reads SHISITTDEGSTA. 2 stretches are compositionally biased toward basic and acidic residues: residues 363–389 and 397–406; these read RAME…EENV and RAKDPPDQPR. A compositionally biased stretch (polar residues) spans 485–496; that stretch reads VEQTSQEPGTGV. Residues 497–510 are compositionally biased toward low complexity; that stretch reads SSFPSSNPAASAQS.

The protein belongs to the Ninja family.

The protein localises to the nucleus. This is Ninja-family protein mc410 (MC410) from Nicotiana tabacum (Common tobacco).